The chain runs to 197 residues: MKIIEVDEELYQYIASQTRSIGESASDILRRLLSLPVHTSIVNDLIITSAETDQKPKQAINVKEVNIKTTKKQSITAINQIVEKVQTLLNSTEFQEESKAVVRFLAILRVLYRTNPESFAQATESLQGRTRVYFARDEATLLMAGNHTKPKQIPDTPYWVITNTNSGRKMLMLEGAMQSMELPETLIDEVRSYFTVN.

3 interaction with DNA regions span residues A100–V101, R129–Y133, and N163–K169.

This sequence belongs to the SeqA family. Homodimer. Polymerizes to form helical filaments.

The protein resides in the cytoplasm. Its function is as follows. Negative regulator of replication initiation, which contributes to regulation of DNA replication and ensures that replication initiation occurs exactly once per chromosome per cell cycle. Binds to pairs of hemimethylated GATC sequences in the oriC region, thus preventing assembly of replication proteins and re-initiation at newly replicated origins. Repression is relieved when the region becomes fully methylated. The polypeptide is Negative modulator of initiation of replication (Haemophilus influenzae (strain ATCC 51907 / DSM 11121 / KW20 / Rd)).